We begin with the raw amino-acid sequence, 139 residues long: Arsenate reductase (139 aa).

Residues C10, C82, and C89 each act as nucleophile in the active site. 2 cysteine pairs are disulfide-bonded: C10–C82 and C82–C89.

This sequence belongs to the low molecular weight phosphotyrosine protein phosphatase family. Thioredoxin-coupled ArsC subfamily. In terms of assembly, monomer.

It is found in the cytoplasm. The enzyme catalyses arsenate + [thioredoxin]-dithiol + H(+) = arsenite + [thioredoxin]-disulfide + H2O. Its activity is regulated as follows. Activity is potassium and sulfate-independent. Its function is as follows. Catalyzes the reduction of arsenate [As(V)] to arsenite [As(III)]. In vitro, can dephosphorylate para-nitrophenyl phosphate (pNPP). The chain is Arsenate reductase from Bacillus subtilis (strain 168).